The sequence spans 86 residues: UPF0297 protein LSL_1110 (86 aa).

This sequence belongs to the UPF0297 family.

This chain is UPF0297 protein LSL_1110, found in Ligilactobacillus salivarius (strain UCC118) (Lactobacillus salivarius).